A 67-amino-acid polypeptide reads, in one-letter code: ATP synthase F(0) complex subunit 8 (67 aa).

The helical transmembrane segment at 8–24 (TWFITITSMIMTLFILF) threads the bilayer. Lysine 54 carries the post-translational modification N6-acetyllysine; alternate. Lysine 54 carries the N6-succinyllysine; alternate modification. Position 57 is an N6-acetyllysine (lysine 57).

This sequence belongs to the ATPase protein 8 family. As to quaternary structure, component of the ATP synthase complex composed at least of ATP5F1A/subunit alpha, ATP5F1B/subunit beta, ATP5MC1/subunit c (homooctomer), MT-ATP6/subunit a, MT-ATP8/subunit 8, ATP5ME/subunit e, ATP5MF/subunit f, ATP5MG/subunit g, ATP5MK/subunit k, ATP5MJ/subunit j, ATP5F1C/subunit gamma, ATP5F1D/subunit delta, ATP5F1E/subunit epsilon, ATP5PF/subunit F6, ATP5PB/subunit b, ATP5PD/subunit d, ATP5PO/subunit OSCP. ATP synthase complex consists of a soluble F(1) head domain (subunits alpha(3) and beta(3)) - the catalytic core - and a membrane F(0) domain - the membrane proton channel (subunits c, a, 8, e, f, g, k and j). These two domains are linked by a central stalk (subunits gamma, delta, and epsilon) rotating inside the F1 region and a stationary peripheral stalk (subunits F6, b, d, and OSCP). Interacts with PRICKLE3.

The protein localises to the mitochondrion membrane. In terms of biological role, subunit 8, of the mitochondrial membrane ATP synthase complex (F(1)F(0) ATP synthase or Complex V) that produces ATP from ADP in the presence of a proton gradient across the membrane which is generated by electron transport complexes of the respiratory chain. ATP synthase complex consist of a soluble F(1) head domain - the catalytic core - and a membrane F(1) domain - the membrane proton channel. These two domains are linked by a central stalk rotating inside the F(1) region and a stationary peripheral stalk. During catalysis, ATP synthesis in the catalytic domain of F(1) is coupled via a rotary mechanism of the central stalk subunits to proton translocation. In vivo, can only synthesize ATP although its ATP hydrolase activity can be activated artificially in vitro. Part of the complex F(0) domain. This Sus scrofa (Pig) protein is ATP synthase F(0) complex subunit 8.